The following is a 251-amino-acid chain: Imidazole glycerol phosphate synthase subunit HisF (251 aa).

Active-site residues include Asp11 and Asp130.

This sequence belongs to the HisA/HisF family. Heterodimer of HisH and HisF.

The protein resides in the cytoplasm. It carries out the reaction 5-[(5-phospho-1-deoxy-D-ribulos-1-ylimino)methylamino]-1-(5-phospho-beta-D-ribosyl)imidazole-4-carboxamide + L-glutamine = D-erythro-1-(imidazol-4-yl)glycerol 3-phosphate + 5-amino-1-(5-phospho-beta-D-ribosyl)imidazole-4-carboxamide + L-glutamate + H(+). The protein operates within amino-acid biosynthesis; L-histidine biosynthesis; L-histidine from 5-phospho-alpha-D-ribose 1-diphosphate: step 5/9. In terms of biological role, IGPS catalyzes the conversion of PRFAR and glutamine to IGP, AICAR and glutamate. The HisF subunit catalyzes the cyclization activity that produces IGP and AICAR from PRFAR using the ammonia provided by the HisH subunit. The sequence is that of Imidazole glycerol phosphate synthase subunit HisF from Phocaeicola vulgatus (strain ATCC 8482 / DSM 1447 / JCM 5826 / CCUG 4940 / NBRC 14291 / NCTC 11154) (Bacteroides vulgatus).